A 346-amino-acid chain; its full sequence is Biotin synthase (346 aa).

Positions 38-256 constitute a Radical SAM core domain; it reads QQVQVSTLLS…IAVARIMMPT (219 aa). 3 residues coordinate [4Fe-4S] cluster: cysteine 53, cysteine 57, and cysteine 60. Residues cysteine 97, cysteine 128, cysteine 188, and arginine 260 each coordinate [2Fe-2S] cluster.

The protein belongs to the radical SAM superfamily. Biotin synthase family. In terms of assembly, homodimer. It depends on [4Fe-4S] cluster as a cofactor. Requires [2Fe-2S] cluster as cofactor.

It catalyses the reaction (4R,5S)-dethiobiotin + (sulfur carrier)-SH + 2 reduced [2Fe-2S]-[ferredoxin] + 2 S-adenosyl-L-methionine = (sulfur carrier)-H + biotin + 2 5'-deoxyadenosine + 2 L-methionine + 2 oxidized [2Fe-2S]-[ferredoxin]. It participates in cofactor biosynthesis; biotin biosynthesis; biotin from 7,8-diaminononanoate: step 2/2. Its function is as follows. Catalyzes the conversion of dethiobiotin (DTB) to biotin by the insertion of a sulfur atom into dethiobiotin via a radical-based mechanism. This Salmonella gallinarum (strain 287/91 / NCTC 13346) protein is Biotin synthase.